We begin with the raw amino-acid sequence, 199 residues long: Adenosylcobinamide-GDP ribazoletransferase (199 aa).

2 consecutive transmembrane segments (helical) span residues 2–22 (LAGG…VFAV) and 61–81 (IAAV…VAAL).

This sequence belongs to the CobS family. Mg(2+) is required as a cofactor.

The protein resides in the cell membrane. The enzyme catalyses alpha-ribazole + adenosylcob(III)inamide-GDP = adenosylcob(III)alamin + GMP + H(+). It carries out the reaction alpha-ribazole 5'-phosphate + adenosylcob(III)inamide-GDP = adenosylcob(III)alamin 5'-phosphate + GMP + H(+). It participates in cofactor biosynthesis; adenosylcobalamin biosynthesis; adenosylcobalamin from cob(II)yrinate a,c-diamide: step 7/7. In terms of biological role, joins adenosylcobinamide-GDP and alpha-ribazole to generate adenosylcobalamin (Ado-cobalamin). Also synthesizes adenosylcobalamin 5'-phosphate from adenosylcobinamide-GDP and alpha-ribazole 5'-phosphate. The polypeptide is Adenosylcobinamide-GDP ribazoletransferase (Halobacterium salinarum (strain ATCC 700922 / JCM 11081 / NRC-1) (Halobacterium halobium)).